Here is a 239-residue protein sequence, read N- to C-terminus: tRNA (guanine-N(7)-)-methyltransferase (239 aa).

The S-adenosyl-L-methionine site is built by E69, E94, D121, and D144. D144 is a catalytic residue. K148 contributes to the substrate binding site. The tract at residues 150–155 (RHNKRR) is interaction with RNA. Residues D180 and 217-220 (TKFE) contribute to the substrate site.

Belongs to the class I-like SAM-binding methyltransferase superfamily. TrmB family. Monomer.

The catalysed reaction is guanosine(46) in tRNA + S-adenosyl-L-methionine = N(7)-methylguanosine(46) in tRNA + S-adenosyl-L-homocysteine. Its pathway is tRNA modification; N(7)-methylguanine-tRNA biosynthesis. Catalyzes the formation of N(7)-methylguanine at position 46 (m7G46) in tRNA. The sequence is that of tRNA (guanine-N(7)-)-methyltransferase from Escherichia coli O6:K15:H31 (strain 536 / UPEC).